A 930-amino-acid chain; its full sequence is MARLGRTGFLTLAVVFHLIYAYSIFDIYFVSPIVSGMRPFRVEREPGSEAPAKRLVLFVADGLRADKAFELTPDPDLPEESNGDDLTFLAPFIRSRVLSHGTFGISHTRVPTESRPGHVALIAGLYEDVSAVTTGWKLNPVNFDSVFNRSRHTWSWGSPDILLMFKEGAVPGRVDADTYGEELEDFTSDATALDIWVFDKVKELFASAKKDPELNAKLREDKNVFFLHLLGLDTTGHGYRPYSKEYLRNIKLVDQGIKEISQLVEDFYGDDKTAFVFTADHGMSDWGSHGDGHPDNTRTPLVVWGSGVAPPKQPQHGVPSGHEDGVSADWHLNQVQRNDVAQADVAALMAYLVGLDFPTNSVGQLPLEYVDGTPREKALAALANTQEVLEMYHVKEEHKKAALLRYRPFEPLASDYGNSAEQRLAMIKDLIDRGFYEDAIETSAALFATALEGLRYLQTYDWLFLRTIVTFGYVGWIAYALTTVIHLHVLHGASESDRTTASISFFSSVLVALFSVFLYQGSPWRYYLYGFFPIFFWEEVFARRKAFHAGRAGALLLPKRDLHSNKVEDIDTITYGGAFMLLTGLLYLLFEDEILGTSHQPAAVSRKGSRNIMGLQLGMVLLALIVTRSSAASLQAKQGLPFGNQVVGWGVLIASLLLPFAHRLYPNSHYLHRLMIIFLTFSPTFIILTISYEGLFYFAFCMTLVTWVRLEHATYVYTAKPVAKQAQETIEPPKKANPGATTVVDGETYRFRTLTVSDARVALFFFFLLQSAFFSTGNIASISSFSLDSVYRLIPVFNPFSQGALLILKLLIPFAIISANLGILNRRLEVAPSALFMVVMAISDVMTLNFFYMVRDEGSWLDIGTTISHFCIASFLCTFVAGLEFLSEVFISGVDFGLRTDAITASVPDIVNGITSKGQKDVPNGVEDKE.

Topologically, residues methionine 1 to glycine 8 are cytoplasmic. The chain crosses the membrane as a helical span at residues phenylalanine 9–phenylalanine 29. The Lumenal segment spans residues valine 30–arginine 466. The N-linked (GlcNAc...) asparagine glycan is linked to asparagine 148. Residues threonine 467–leucine 487 traverse the membrane as a helical segment. Residues histidine 488–arginine 498 lie on the Cytoplasmic side of the membrane. A helical membrane pass occupies residues threonine 499–tyrosine 519. Residues glutamine 520 to glycine 521 lie on the Lumenal side of the membrane. The helical transmembrane segment at serine 522–alanine 542 threads the bilayer. The Cytoplasmic portion of the chain corresponds to arginine 543–aspartate 569. The chain crosses the membrane as a helical span at residues isoleucine 570–phenylalanine 590. At glutamate 591–asparagine 611 the chain is on the lumenal side. The chain crosses the membrane as a helical span at residues isoleucine 612–alanine 632. The Cytoplasmic portion of the chain corresponds to serine 633 to glycine 639. Residues leucine 640–phenylalanine 660 traverse the membrane as a helical segment. Residues alanine 661–threonine 684 are Lumenal-facing. The helical transmembrane segment at phenylalanine 685–valine 705 threads the bilayer. The Cytoplasmic segment spans residues threonine 706–valine 761. Residues alanine 762–isoleucine 782 form a helical membrane-spanning segment. At serine 783 to glycine 803 the chain is on the lumenal side. The chain crosses the membrane as a helical span at residues alanine 804 to leucine 824. The Cytoplasmic portion of the chain corresponds to asparagine 825–serine 833. Residues alanine 834–valine 854 form a helical membrane-spanning segment. The Lumenal portion of the chain corresponds to arginine 855–phenylalanine 870. Residues cysteine 871–isoleucine 891 traverse the membrane as a helical segment. Residues serine 892 to glutamate 930 lie on the Cytoplasmic side of the membrane.

The protein belongs to the PIGG/PIGN/PIGO family. PIGN subfamily.

Its subcellular location is the endoplasmic reticulum membrane. The protein operates within glycolipid biosynthesis; glycosylphosphatidylinositol-anchor biosynthesis. Functionally, ethanolamine phosphate transferase involved in glycosylphosphatidylinositol-anchor biosynthesis. Transfers ethanolamine phosphate to the first alpha-1,4-linked mannose of the glycosylphosphatidylinositol precursor of GPI-anchor. This is GPI ethanolamine phosphate transferase 1 (mcd4) from Emericella nidulans (strain FGSC A4 / ATCC 38163 / CBS 112.46 / NRRL 194 / M139) (Aspergillus nidulans).